Consider the following 402-residue polypeptide: Phosphoglycerate kinase (402 aa).

Residues 24–26 (DFN), R40, 63–66 (HFGR), R122, and R155 contribute to the substrate site. ATP is bound by residues K206, G297, E328, and 357–360 (GGDS).

The protein belongs to the phosphoglycerate kinase family. As to quaternary structure, monomer.

It is found in the cytoplasm. It catalyses the reaction (2R)-3-phosphoglycerate + ATP = (2R)-3-phospho-glyceroyl phosphate + ADP. The protein operates within carbohydrate degradation; glycolysis; pyruvate from D-glyceraldehyde 3-phosphate: step 2/5. This is Phosphoglycerate kinase from Synechococcus sp. (strain ATCC 27144 / PCC 6301 / SAUG 1402/1) (Anacystis nidulans).